Here is a 38-residue protein sequence, read N- to C-terminus: Toxin Bot33 (38 aa).

3 disulfides stabilise this stretch: cysteine 8–cysteine 28, cysteine 14–cysteine 33, and cysteine 18–cysteine 35.

Belongs to the short scorpion toxin superfamily. Potassium channel inhibitor family. Expressed by the venom gland.

It is found in the secreted. Functionally, a probable toxin that has no activity on the tested mammalian voltage-gated potassium channels (when tested at 1 uM) and is not toxic to mice. It resembles alpha toxins that block voltage-gated potassium channels. The protein is Toxin Bot33 of Buthus occitanus tunetanus (Common European scorpion).